A 502-amino-acid polypeptide reads, in one-letter code: Probable cytochrome P450 28d1 (502 aa).

C446 is a binding site for heme.

This sequence belongs to the cytochrome P450 family. Requires heme as cofactor.

The protein resides in the endoplasmic reticulum membrane. It localises to the microsome membrane. Its function is as follows. May be involved in the metabolism of insect hormones and in the breakdown of synthetic insecticides. The protein is Probable cytochrome P450 28d1 (Cyp28d1) of Drosophila melanogaster (Fruit fly).